We begin with the raw amino-acid sequence, 425 residues long: UPF0229 protein SG1344 (425 aa).

The tract at residues 49 to 109 (GESVSIPNTD…GQGSVSQDGE (61 aa)) is disordered. The segment covering 50–59 (ESVSIPNTDI) has biased composition (polar residues). Positions 77 to 90 (PGNDHFVQNDRIER) are enriched in basic and acidic residues.

It belongs to the UPF0229 family.

This chain is UPF0229 protein SG1344, found in Sodalis glossinidius (strain morsitans).